We begin with the raw amino-acid sequence, 314 residues long: tRNA pseudouridine synthase B (314 aa).

Substrate is bound at residue His-43. Residue Asp-48 is the Nucleophile of the active site. Residues Tyr-76, Tyr-179, and Leu-200 each coordinate substrate.

This sequence belongs to the pseudouridine synthase TruB family. Type 1 subfamily.

The catalysed reaction is uridine(55) in tRNA = pseudouridine(55) in tRNA. Functionally, responsible for synthesis of pseudouridine from uracil-55 in the psi GC loop of transfer RNAs. In Salmonella paratyphi B (strain ATCC BAA-1250 / SPB7), this protein is tRNA pseudouridine synthase B.